A 433-amino-acid chain; its full sequence is MGFHIYEIKARQIIDSRGNPTVEADVILEDGTYGRAAVPSGASTGINEAVELRDGDKSVYMGKGVLKAIENIKNIIAPELEGMSALNQVAIDRKMLELDGTPTKEKLGANAILAVSMATAKAAAKYLGLRPYQYLGAYKANILPTPMCNIINGGAHSDNSVDFQEFMIMPIGAKTFSEAIRMAAEVFHTLKGILSGKGYATSVGDEGGFAPNLKSNEEACEVIIEAIKKAGYEPGKDIAIALDPATSELYDPKTKKYVLKWSTKEKLTSEQMVEYWAKWVEKYPIISIEDGMAEEDWDGWKKLTDKIGNKIQLVGDDLFVTNTSFLKKGIEMGVANSILIKVNQIGTLTETFEAVEMAKKAGYTAIVSHRSGETEDTTIADLVVALGTGQIKTGSLSRTDRIAKYNQLIRIEEELETTAEYHGKSVFYSIKQK.

Residue Q164 coordinates (2R)-2-phosphoglycerate. Catalysis depends on E206, which acts as the Proton donor. Mg(2+)-binding residues include D243, E289, and D316. (2R)-2-phosphoglycerate contacts are provided by K341, R370, S371, and K392. K341 functions as the Proton acceptor in the catalytic mechanism.

Belongs to the enolase family. Mg(2+) is required as a cofactor.

The protein localises to the cytoplasm. The protein resides in the secreted. It localises to the cell surface. It catalyses the reaction (2R)-2-phosphoglycerate = phosphoenolpyruvate + H2O. It functions in the pathway carbohydrate degradation; glycolysis; pyruvate from D-glyceraldehyde 3-phosphate: step 4/5. In terms of biological role, catalyzes the reversible conversion of 2-phosphoglycerate (2-PG) into phosphoenolpyruvate (PEP). It is essential for the degradation of carbohydrates via glycolysis. The polypeptide is Enolase (Borreliella burgdorferi (strain ATCC 35210 / DSM 4680 / CIP 102532 / B31) (Borrelia burgdorferi)).